The primary structure comprises 360 residues: Biotin synthase (360 aa).

Residues 1-25 are disordered; it reads MQHAPLNFVPDAAKVPPTPGQSPNA. The Radical SAM core domain occupies 58-285; that stretch reads NAVQLSTLLS…KAMVRLSAGR (228 aa). Positions 73, 77, and 80 each coordinate [4Fe-4S] cluster. [2Fe-2S] cluster is bound by residues Cys117, Cys148, Cys208, and Arg280. Positions 340 to 360 are disordered; it reads QAEGAQHSHSSHCHIDITPAD.

It belongs to the radical SAM superfamily. Biotin synthase family. Homodimer. Requires [4Fe-4S] cluster as cofactor. It depends on [2Fe-2S] cluster as a cofactor.

The enzyme catalyses (4R,5S)-dethiobiotin + (sulfur carrier)-SH + 2 reduced [2Fe-2S]-[ferredoxin] + 2 S-adenosyl-L-methionine = (sulfur carrier)-H + biotin + 2 5'-deoxyadenosine + 2 L-methionine + 2 oxidized [2Fe-2S]-[ferredoxin]. Its pathway is cofactor biosynthesis; biotin biosynthesis; biotin from 7,8-diaminononanoate: step 2/2. Its function is as follows. Catalyzes the conversion of dethiobiotin (DTB) to biotin by the insertion of a sulfur atom into dethiobiotin via a radical-based mechanism. This chain is Biotin synthase, found in Ralstonia nicotianae (strain ATCC BAA-1114 / GMI1000) (Ralstonia solanacearum).